A 943-amino-acid chain; its full sequence is MGKKRVYEFAKEMHVDNKDVIDIAKNLGIEVKNHMSSIDQDQEAKIKGMLSKQSAGKAPSSQAAKTPAKAAKTSSAAHKEAAKKPVAASAKSNDHADVAEHSQKNAKPAAKQENKPARSNKTSDGKIILSKSTILRPRSTQTAHTNTNHNRGGNTASANNTANGRNSNRSNNNNNNRSANNANRSGNNNRSNERNRNDRNRRFDNQRVTGPMPRAGRPTAANGNPRPVAGNGGKFVKPASERQQPKRQEAVKPANAASKRSEQPRTERPRTEQPAATTNQRFTKPAPVPAAAAPKPASAGSQDNRNSRRGGGNSNFGRSNSYGNRNGFNRNNRRNKKNKRRQQSAPKKEMPQRKERPLPETLIYEVGMNAQDLGKILHREPAELIKKLFMLGVMVNQNQSLDKDTIELLATDYGIDAQEKVHEDISDLDKVFEEENKNQDNLQPRPPVVTIMGHVDHGKTTLLDKLRHTHVTEGEAGGITQHIGAYQVKLRDRLITFLDTPGHAAFTNMRARGADITDIVVLVVAADDGVMPQTIEAIHHAQAAKAPIIVAVNKIDKPGANPDHVMEQLTEYGLIPEDWGGDTIFVKISAKFGKNIDELLEMILLEADVLELKANPDQKAVGTVIEARLDKGKGPVATVLVQQGTLHTGDPIVVGNTFGRVRAMTNDHGRRVKDALPSMPVEITGINDVPQSADKFVVFADERTARAAGEERAKRAQEEERKNTNHVTLDNLFETMKEGQLKEVDVIIKADVQGSVEALAGSLEKIEVKGVRVNIIHQAVGAINESDVTLAAASNAIIIGFNVRPTALAKAQAEQDDVDIRLHSVIYKAIEEVEAAMKGMLEPTYEEKVIGTVTVRETIPVSKVGTVVGGYVDSGYITRDAGVRLVRDGIVKYEGKLGSLRRFKDDVKEVRQGFELGLTIENYNDIKVDDQIEAFTMEQVPVK.

The tract at residues 46–359 (IKGMLSKQSA…MPQRKERPLP (314 aa)) is disordered. The span at 57–76 (KAPSSQAAKTPAKAAKTSSA) shows a compositional bias: low complexity. 2 stretches are compositionally biased toward basic and acidic residues: residues 92 to 103 (SNDHADVAEHSQ) and 110 to 124 (AKQE…KTSD). A compositionally biased stretch (polar residues) spans 130–141 (SKSTILRPRSTQ). Residues 142–190 (TAHTNTNHNRGGNTASANNTANGRNSNRSNNNNNNRSANNANRSGNNNR) are compositionally biased toward low complexity. Composition is skewed to basic and acidic residues over residues 191 to 205 (SNER…RFDN), 239 to 250 (ASERQQPKRQEA), and 259 to 271 (KRSE…RPRT). Composition is skewed to low complexity over residues 289-299 (PAAAAPKPASA) and 315-330 (NFGR…GFNR). Over residues 331–342 (NNRRNKKNKRRQ) the composition is skewed to basic residues. Over residues 346–358 (PKKEMPQRKERPL) the composition is skewed to basic and acidic residues. The tr-type G domain maps to 444–613 (PRPPVVTIMG…LLEADVLELK (170 aa)). Positions 453 to 460 (GHVDHGKT) are G1. Position 453–460 (453–460 (GHVDHGKT)) interacts with GTP. The interval 478–482 (GITQH) is G2. Residues 499 to 502 (DTPG) form a G3 region. GTP contacts are provided by residues 499–503 (DTPGH) and 553–556 (NKID). The interval 553 to 556 (NKID) is G4. Residues 589 to 591 (SAK) form a G5 region.

This sequence belongs to the TRAFAC class translation factor GTPase superfamily. Classic translation factor GTPase family. IF-2 subfamily.

It is found in the cytoplasm. Its function is as follows. One of the essential components for the initiation of protein synthesis. Protects formylmethionyl-tRNA from spontaneous hydrolysis and promotes its binding to the 30S ribosomal subunits. Also involved in the hydrolysis of GTP during the formation of the 70S ribosomal complex. This Lacticaseibacillus casei (strain BL23) (Lactobacillus casei) protein is Translation initiation factor IF-2.